The sequence spans 193 residues: Rho-related protein racF2 (193 aa).

10-17 (GDGAVGKT) provides a ligand contact to GTP. An Effector region motif is present at residues 32–40 (YLPTVFDNY). GTP-binding positions include 57–61 (DTAGQ) and 115–118 (TKQD). Cys190 is subject to Cysteine methyl ester. A lipid anchor (S-geranylgeranyl cysteine) is attached at Cys190. The propeptide at 191-193 (TIM) is removed in mature form.

This sequence belongs to the small GTPase superfamily. Rho family.

The protein localises to the cell membrane. This is Rho-related protein racF2 (racF2) from Dictyostelium discoideum (Social amoeba).